The primary structure comprises 1047 residues: Isoleucine--tRNA ligase (1047 aa).

Positions 52-62 (PTANGMPGAHH) match the 'HIGH' region motif. Positions 600-604 (KMSKH) match the 'KMSKS' region motif. Lysine 603 contacts ATP.

This sequence belongs to the class-I aminoacyl-tRNA synthetase family. IleS type 2 subfamily. In terms of assembly, monomer. Zn(2+) is required as a cofactor.

The protein localises to the cytoplasm. It catalyses the reaction tRNA(Ile) + L-isoleucine + ATP = L-isoleucyl-tRNA(Ile) + AMP + diphosphate. Catalyzes the attachment of isoleucine to tRNA(Ile). As IleRS can inadvertently accommodate and process structurally similar amino acids such as valine, to avoid such errors it has two additional distinct tRNA(Ile)-dependent editing activities. One activity is designated as 'pretransfer' editing and involves the hydrolysis of activated Val-AMP. The other activity is designated 'posttransfer' editing and involves deacylation of mischarged Val-tRNA(Ile). This Streptomyces avermitilis (strain ATCC 31267 / DSM 46492 / JCM 5070 / NBRC 14893 / NCIMB 12804 / NRRL 8165 / MA-4680) protein is Isoleucine--tRNA ligase.